Consider the following 194-residue polypeptide: Probable GTP-binding protein EngB (194 aa).

The region spanning 22 to 194 (PLPEVALAGR…AWKAILHAIS (173 aa)) is the EngB-type G domain. Residues 30 to 37 (GRSNVGKS), 57 to 61 (GKTQT), 75 to 78 (DVPG), 142 to 145 (TKCD), and 174 to 176 (FSS) contribute to the GTP site. Positions 37 and 59 each coordinate Mg(2+).

The protein belongs to the TRAFAC class TrmE-Era-EngA-EngB-Septin-like GTPase superfamily. EngB GTPase family. It depends on Mg(2+) as a cofactor.

In terms of biological role, necessary for normal cell division and for the maintenance of normal septation. The sequence is that of Probable GTP-binding protein EngB from Halalkalibacterium halodurans (strain ATCC BAA-125 / DSM 18197 / FERM 7344 / JCM 9153 / C-125) (Bacillus halodurans).